Reading from the N-terminus, the 205-residue chain is Protein N-terminal glutamine amidohydrolase (205 aa).

Catalysis depends on residues Cys-20, His-74, and Asp-90.

This sequence belongs to the NTAQ1 family. In terms of assembly, monomer.

It carries out the reaction N-terminal L-glutaminyl-[protein] + H2O = N-terminal L-glutamyl-[protein] + NH4(+). Mediates the side-chain deamidation of N-terminal glutamine residues to glutamate, an important step in N-end rule pathway of protein degradation. Conversion of the resulting N-terminal glutamine to glutamate renders the protein susceptible to arginylation, polyubiquitination and degradation as specified by the N-end rule. Does not act on substrates with internal or C-terminal glutamine and does not act on non-glutamine residues in any position. The sequence is that of Protein N-terminal glutamine amidohydrolase (tun) from Drosophila ananassae (Fruit fly).